A 122-amino-acid polypeptide reads, in one-letter code: Large ribosomal subunit protein uL14c (122 aa).

The protein belongs to the universal ribosomal protein uL14 family. Part of the 50S ribosomal subunit.

The protein localises to the plastid. Its function is as follows. Binds to 23S rRNA. The sequence is that of Large ribosomal subunit protein uL14c from Euglena longa (Euglenophycean alga).